Here is a 129-residue protein sequence, read N- to C-terminus: Small ribosomal subunit protein uS11 (129 aa).

Belongs to the universal ribosomal protein uS11 family. In terms of assembly, part of the 30S ribosomal subunit. Interacts with proteins S7 and S18. Binds to IF-3.

Its function is as follows. Located on the platform of the 30S subunit, it bridges several disparate RNA helices of the 16S rRNA. Forms part of the Shine-Dalgarno cleft in the 70S ribosome. The protein is Small ribosomal subunit protein uS11 of Dinoroseobacter shibae (strain DSM 16493 / NCIMB 14021 / DFL 12).